The chain runs to 275 residues: Arylalkylamine N-acetyltransferase 1 (275 aa).

Residues 181–183 (LSV) and 189–193 (GLGIA) contribute to the acetyl-CoA site. Residues 181–254 (LSVDTNYRGL…GEVVFKPAAP (74 aa)) form the N-acetyltransferase domain.

The protein belongs to the acetyltransferase family. AANAT subfamily. In terms of tissue distribution, in the adult, expressed in the midgut portion of the thoracic segments and the frontal half of the abdomen (at protein level). Expressed in the epithelial cell layer facing the lumen of the gut (at protein level). In the brain, expressed in a sub-populations of neurons and astrocytes, and in a set of distinct stripes in the optic lobes (at protein level). Expressed mainly in serotonergic neurons but also in subsets of glutamatergic, GABAergic and cholinergic neurons (at protein level).

The protein localises to the cytoplasm. It localises to the nucleus. It carries out the reaction a 2-arylethylamine + acetyl-CoA = an N-acetyl-2-arylethylamine + CoA + H(+). It catalyses the reaction serotonin + acetyl-CoA = N-acetylserotonin + CoA + H(+). The enzyme catalyses dopamine + acetyl-CoA = N-acetyldopamine + CoA + H(+). The catalysed reaction is tyramine + acetyl-CoA = N-acetyltyramine + CoA + H(+). It carries out the reaction octopamine + acetyl-CoA = N-acetyloctopamine + CoA + H(+). It catalyses the reaction 5-methoxytryptamine + acetyl-CoA = melatonin + CoA + H(+). The enzyme catalyses 2-phenylethylamine + acetyl-CoA = N-(2-phenylethyl)acetamide + CoA + H(+). The catalysed reaction is noradrenaline + acetyl-CoA = N-acetylnoradrenaline + CoA + H(+). It carries out the reaction tyramine + butanoyl-CoA = N-butanoyltyramine + CoA + H(+). It catalyses the reaction tyramine + hexanoyl-CoA = N-hexanoyltyramine + CoA + H(+). The enzyme catalyses tryptamine + acetyl-CoA = N-acetyltryptamine + CoA + H(+). The catalysed reaction is dopamine + hexadecanoyl-CoA = N-hexadecanoyl-dopamine + CoA + H(+). It carries out the reaction dopamine + (9Z)-octadecenoyl-CoA = N-(9Z-octadecanoyl)-dopamine + CoA + H(+). It catalyses the reaction serotonin + hexadecanoyl-CoA = N-hexadecanoyl-serotonin + CoA + H(+). The enzyme catalyses serotonin + (9Z)-octadecenoyl-CoA = N-(9Z-octadecenoyl)-serotonin + CoA + H(+). The catalysed reaction is serotonin + octadecanoyl-CoA = N-octadecanoyl-serotonin + CoA + H(+). It carries out the reaction serotonin + (5Z,8Z,11Z,14Z)-eicosatetraenoyl-CoA = N-[(5Z,8Z,11Z,14Z)-eicosatetraenoyl]-serotonin + CoA + H(+). It functions in the pathway aromatic compound metabolism; melatonin biosynthesis; melatonin from serotonin: step 1/2. Inhibited by long-chain acyl-CoA thioesters, oleoyl-CoA (an analog of acetyl-CoA) and tyrosol (an analog of tyramine). Catalyzes N-acetylation of tryptamine, tyramine, dopamine, serotonin and octopamine. In astrocytes, regulates sleep homeostasis by limiting the accumulation of serotonin and dopamine in the brain upon sleep deprivation. Is not essential for sclerotization. This is Arylalkylamine N-acetyltransferase 1 from Drosophila melanogaster (Fruit fly).